We begin with the raw amino-acid sequence, 378 residues long: Lysocardiolipin acyltransferase 1 (378 aa).

2 helical membrane-spanning segments follow: residues 9 to 29 (FVVA…GPFL) and 46 to 66 (IVAT…GAKV). An HXXXXD motif motif is present at residues 85–90 (HRTRMD). The next 2 membrane-spanning stretches (helical) occupy residues 302–322 (LRVL…PMGT) and 336–358 (FAAM…LIEL).

The protein belongs to the 1-acyl-sn-glycerol-3-phosphate acyltransferase family.

It is found in the endoplasmic reticulum membrane. The enzyme catalyses a 1-acyl-sn-glycero-3-phosphate + an acyl-CoA = a 1,2-diacyl-sn-glycero-3-phosphate + CoA. It carries out the reaction a 1-acyl-sn-glycero-3-phospho-(1D-myo-inositol) + an acyl-CoA = a 1,2-diacyl-sn-glycero-3-phospho-(1D-myo-inositol) + CoA. It catalyses the reaction 1-acyl-sn-glycero-3-phospho-(1'-sn-glycerol) + an acyl-CoA = a 1,2-diacyl-sn-glycero-3-phospho-(1'-sn-glycerol) + CoA. The catalysed reaction is 1-hexadecanoyl-sn-glycero-3-phosphate + (9Z)-octadecenoyl-CoA = 1-hexadecanoyl-2-(9Z-octadecenoyl)-sn-glycero-3-phosphate + CoA. The enzyme catalyses 1-(9Z-octadecenoyl)-sn-glycero-3-phosphate + (9Z)-octadecenoyl-CoA = 1,2-di-(9Z-octadecenoyl)-sn-glycero-3-phosphate + CoA. It carries out the reaction 1-(9Z,12Z)-octadecadienoyl-sn-glycero-3-phosphate + (9Z)-octadecenoyl-CoA = 1-(9Z,12Z)-octadecadienoyl-2-(9Z)-octadecenoyl-sn-glycero-3-phosphate + CoA. It catalyses the reaction 1-(9Z,12Z,15Z)-octadecatrienoyl-sn-glycero-3-phosphate + (9Z)-octadecenoyl-CoA = 1-(9Z,12Z,15Z)-octadecatrienoyl-2-(9Z)-octadecenoyl-sn-glycero-3-phosphate + CoA. The catalysed reaction is 1-(9Z-octadecenoyl)-sn-glycero-3-phosphate + hexadecanoyl-CoA = 1-(9Z)-octadecenoyl-2-hexadecanoyl-sn-glycero-3-phosphate + CoA. The enzyme catalyses 1-(9Z-octadecenoyl)-sn-glycero-3-phosphate + octadecanoyl-CoA = 1-(9Z-octadecenoyl)-2-octadecanoyl-sn-glycero-3-phosphate + CoA. It carries out the reaction 1-acyl-sn-glycero-3-phospho-(1'-sn-glycerol) + (9Z)-octadecenoyl-CoA = 1-acyl-2-(9Z-octadecenoyl)-sn-glycero-3-phospho-(1'-sn-glycerol) + CoA. It catalyses the reaction a 1-acyl-sn-glycero-3-phospho-(1D-myo-inositol) + (9Z)-octadecenoyl-CoA = a 1-acyl-2-(9Z-octadecenoyl)-sn-glycero-3-phospho-(1D-myo-inositol) + CoA. The catalysed reaction is 1-hexadecanoyl-sn-glycero-3-phospho-(1D-myo-inositol) + hexadecanoyl-CoA = 1,2-dihexadecanoyl-sn-glycero-3-phospho-(1D-myo-inositol) + CoA. The enzyme catalyses 1-hexadecanoyl-sn-glycero-3-phospho-(1D-myo-inositol) + octadecanoyl-CoA = 1-hexadecanoyl-2-octadecanoyl-sn-glycero-3-phospho-(1D-myo-inositol) + CoA. It carries out the reaction 1-hexadecanoyl-sn-glycero-3-phospho-(1D-myo-inositol) + (9Z)-octadecenoyl-CoA = 1-hexadecanoyl-2-(9Z-octadecenoyl)-sn-glycero-3-phospho-(1D-myo-inositol) + CoA. It catalyses the reaction 1-hexadecanoyl-sn-glycero-3-phospho-(1D-myo-inositol) + (9Z,12Z)-octadecadienoyl-CoA = 1-hexadecanoyl-2-(9Z,12Z-octadecadienoyl)-sn-glycero-3-phospho-(1D-myo-inositol) + CoA. The catalysed reaction is 1-hexadecanoyl-sn-glycero-3-phospho-(1D-myo-inositol) + (5Z,8Z,11Z,14Z)-eicosatetraenoyl-CoA = 1-hexadecanoyl-2-(5Z,8Z,11Z,14Z-eicosatetraenoyl)-sn-glycero-3-phospho-D-myo-inositol + CoA. The enzyme catalyses 1-hexadecanoyl-sn-glycero-3-phospho-(1'-sn-glycerol) + hexadecanoyl-CoA = 1,2-dihexadecanoyl-sn-glycero-3-phospho-(1'-sn-glycerol) + CoA. It carries out the reaction 1-hexadecanoyl-sn-glycero-3-phospho-(1'-sn-glycerol) + octadecanoyl-CoA = 1-hexadecanoyl-2-octadecanoyl-sn-glycero-3-phospho-(1'-sn-glycerol) + CoA. It catalyses the reaction 1-hexadecanoyl-sn-glycero-3-phospho-(1'-sn-glycerol) + (9Z)-octadecenoyl-CoA = 1-hexadecanoyl-2-(9Z-octadecenoyl)-sn-glycero-3-phospho-(1'-sn-glycerol) + CoA. The catalysed reaction is 1-hexadecanoyl-sn-glycero-3-phospho-(1'-sn-glycerol) + (9Z,12Z)-octadecadienoyl-CoA = 1-hexadecanoyl-2-(9Z,12Z-octadecadienoyl)-sn-glycero-3-phospho-(1'-sn-glycerol) + CoA. The enzyme catalyses 1-tetradecanoyl-sn-glycero-3-phospho-(1'-sn-glycerol) + (9Z)-octadecenoyl-CoA = 1-tetradecanoyl-2-(9Z-octadecenoyl)-sn-glycero-3-phospho-(1'-sn-glycerol) + CoA. It carries out the reaction 1-octadecanoyl-sn-glycero-3-phospho-(1'-sn-glycerol) + (9Z)-octadecenoyl-CoA = 1-octadecanoyl-2-(9Z-octadecenoyl)-sn-glycero-3-phospho-(1'-sn-glycerol) + CoA. It catalyses the reaction 1-(9Z-octadecenoyl)-sn-glycero-3-phospho-(1'-sn-glycerol) + (9Z)-octadecenoyl-CoA = 1,2-di-(9Z-octadecenoyl)-sn-glycero-3-phospho-(1'-sn-glycerol) + CoA. The catalysed reaction is 1-hexadecanoyl-sn-glycero-3-phospho-(1D-myo-inositol) + dodecanoyl-CoA = 1-hexadecanoyl-2-dodecanoyl-sn-glycero-3-phospho-(1D-myo-inositol) + CoA. The enzyme catalyses 1',3'-bis-[1-acyl-sn-glycero-3-phospho]-glycerol + (9Z)-octadecenoyl-CoA = 1'-[1-acyl-2-(9Z)-octadecenoyl-sn-glycero-3-phospho],3'-[1-acyl,2-hydroxy-sn-glycero-3-phospho]-glycerol + CoA. It carries out the reaction 1'-[1,2-diacyl-sn-glycero-3-phospho],3'-[1-acyl-sn-glycero-3-phospho]-glycerol + (9Z)-octadecenoyl-CoA = 1'-[1,2-diacyl-sn-glycero-3-phospho],3'-[1-acyl,2-(9Z)-octadecenoyl-sn-glycero-3-phospho]-glycerol + CoA. It catalyses the reaction 1'-[1,2-diacyl-sn-glycero-3-phospho],3'-[1-acyl-sn-glycero-3-phospho]-glycerol + (9Z,12Z)-octadecadienoyl-CoA = 1'-[1,2-diacyl-sn-glycero-3-phospho],3'-[1-acyl,2-(9Z,12Z)-octadecadienoyl-sn-glycero-3-phospho]-glycerol + CoA. The catalysed reaction is 1'-[1,2-diacyl-sn-glycero-3-phospho],3'-[1-acyl-sn-glycero-3-phospho]-glycerol + dodecanoyl-CoA = 1'-[1,2-diacyl-sn-glycero-3-phospho],3'-[1-acyl,2-dodecanoyl-sn-glycero-3-phospho]-glycerol + CoA. The enzyme catalyses 1',3'-bis-[1-acyl-sn-glycero-3-phospho]-glycerol + dodecanoyl-CoA = 1'-[1-acyl-2-dodecanoyl-sn-glycero-3-phospho],3'-[1-acyl,2-hydroxy-sn-glycero-3-phospho]-glycerol + CoA. It carries out the reaction a 1-acyl-sn-glycero-3-phosphate + (9Z)-octadecenoyl-CoA = a 1-acyl-2-(9Z-octadecenoyl)-sn-glycero-3-phosphate + CoA. It catalyses the reaction 1',3'-bis-[1-acyl-sn-glycero-3-phospho]-glycerol + (9Z,12Z)-octadecadienoyl-CoA = 1'-[1-acyl-2-(9Z,12Z)-octadecadienoyl-sn-glycero-3-phospho],3'-[1-acyl,2-hydroxy-sn-glycero-3-phospho]-glycerol + CoA. The catalysed reaction is 1',3'-bis-[1-acyl-sn-glycero-3-phospho]-glycerol + hexadecanoyl-CoA = 1'-[1-acyl-2-hexadecanoyl-sn-glycero-3-phospho],3'-[1-acyl,2-hydroxy-sn-glycero-3-phospho]-glycerol + CoA. The enzyme catalyses 1',3'-bis-[1-acyl-sn-glycero-3-phospho]-glycerol + octadecanoyl-CoA = 1'-[1-acyl-2-octadecanoyl-sn-glycero-3-phospho],3'-[1-acyl,2-hydroxy-sn-glycero-3-phospho]-glycerol + CoA. It carries out the reaction 1'-[1,2-diacyl-sn-glycero-3-phospho],3'-[1-acyl-sn-glycero-3-phospho]-glycerol + octanoyl-CoA = 1'-[1,2-diacyl-sn-glycero-3-phospho],3'-[1-acyl,2-octanoyl-sn-glycero-3-phospho]-glycerol + CoA. It catalyses the reaction 1',3'-bis-[1-acyl-sn-glycero-3-phospho]-glycerol + octanoyl-CoA = 1'-[1-acyl-2-octanoyl-sn-glycero-3-phospho],3'-[1-acyl,2-hydroxy-sn-glycero-3-phospho]-glycerol + CoA. The catalysed reaction is 1'-[1,2-diacyl-sn-glycero-3-phospho],3'-[1-acyl-sn-glycero-3-phospho]-glycerol + hexadecanoyl-CoA = 1'-[1,2-diacyl-sn-glycero-3-phospho],3'-[1-acyl,2-hexadecanoyl-sn-glycero-3-phospho]-glycerol + CoA. The enzyme catalyses 1'-[1,2-diacyl-sn-glycero-3-phospho],3'-[1-acyl-sn-glycero-3-phospho]-glycerol + (5Z,8Z,11Z,14Z)-eicosatetraenoyl-CoA = 1'-[1,2-diacyl-sn-glycero-3-phospho],3'-[1-acyl,2-(5Z,8Z,11Z,14Z)-eicosatetraenoyl-sn-glycero-3-phospho]-glycerol + CoA. It carries out the reaction 1',3'-bis-[1-acyl-sn-glycero-3-phospho]-glycerol + (5Z,8Z,11Z,14Z)-eicosatetraenoyl-CoA = 1'-[1-acyl-2-(5Z,8Z,11Z,14Z)-eicosatetraenoyl-sn-glycero-3-phospho],3'-[1-acyl,2-hydroxy-sn-glycero-3-phospho]-glycerol + CoA. It catalyses the reaction a 1-acyl-sn-glycero-3-phospho-(1D-myo-inositol) + octadecanoyl-CoA = a 1-acyl-2-octadecanoyl-sn-glycero-3-phospho-(1D-myo-inositol) + CoA. The catalysed reaction is a 2-acyl-sn-glycero-3-phospho-D-myo-inositol + octadecanoyl-CoA = 1-octadecanoyl-2-acyl-sn-glycero-3-phospho-1D-myo-inositol + CoA. The protein operates within phospholipid metabolism; CDP-diacylglycerol biosynthesis; CDP-diacylglycerol from sn-glycerol 3-phosphate: step 2/3. Exhibits acyl-CoA:lysocardiolipin acyltransferase (ALCAT) activity; catalyzes the reacylation of lyso-cardiolipin to cardiolipin (CL), a key step in CL remodeling. Recognizes both monolysocardiolipin and dilysocardiolipin as substrates with a preference for linoleoyl-CoA and oleoyl-CoA as acyl donors. Also exhibits 1-acyl-sn-glycerol-3-phosphate acyltransferase activity (AGPAT) activity; converts 1-acyl-sn-glycerol-3- phosphate (lysophosphatidic acid or LPA) into 1,2-diacyl-sn-glycerol-3- phosphate (phosphatidic acid or PA) by incorporating an acyl moiety at the sn-2 position of the glycerol backbone. Possesses both lysophosphatidylinositol acyltransferase (LPIAT) and lysophosphatidylglycerol acyltransferase (LPGAT) activities. Required for establishment of the hematopoietic and endothelial lineages. This Gallus gallus (Chicken) protein is Lysocardiolipin acyltransferase 1 (LCLAT1).